Reading from the N-terminus, the 312-residue chain is MVGLKPSDVPPTMAVKFLGAGTAACFADLVTFPLDTAKVRLQIQGENQAVQTARLVQYRGVLGTILTMVRTEGPCSPYNGLVAGLQRQMSFASIRIGLYDSVKQVYTPKGADNSSLTTRILAGCTTGAMAVTCAQPTDVVKVRFQASIHLGPSRSDRKYSGTMDAYRTIAREEGVRGLWKGTLPNIMRNAIVNCAEVVTYDILKEKLLDYHLLTDNFPCHFVSAFGAGFCATVVASPVDVVKTRYMNSPPGQYFSPLDCMIKMVAQEGPTAFYKGFTPSFLRLGSWNVVMFVTYEQLKRALMKVQMLRESPF.

Topologically, residues 1 to 10 (MVGLKPSDVP) are mitochondrial intermembrane. The chain crosses the membrane as a helical span at residues 11 to 32 (PTMAVKFLGAGTAACFADLVTF). Solcar repeat units follow at residues 11–105 (PTMA…VKQV), 114–206 (SSLT…LKEK), and 215–300 (DNFP…LKRA). Residues 33 to 76 (PLDTAKVRLQIQGENQAVQTARLVQYRGVLGTILTMVRTEGPCS) are Mitochondrial matrix-facing. The helical transmembrane segment at 77–99 (PYNGLVAGLQRQMSFASIRIGLY) threads the bilayer. Over 100-119 (DSVKQVYTPKGADNSSLTTR) the chain is Mitochondrial intermembrane. Residues 120-136 (ILAGCTTGAMAVTCAQP) traverse the membrane as a helical segment. The Mitochondrial matrix segment spans residues 137–183 (TDVVKVRFQASIHLGPSRSDRKYSGTMDAYRTIAREEGVRGLWKGTL). The chain crosses the membrane as a helical span at residues 184–200 (PNIMRNAIVNCAEVVTY). Over 201-217 (DILKEKLLDYHLLTDNF) the chain is Mitochondrial intermembrane. A helical transmembrane segment spans residues 218–237 (PCHFVSAFGAGFCATVVASP). Residues 238 to 271 (VDVVKTRYMNSPPGQYFSPLDCMIKMVAQEGPTA) lie on the Mitochondrial matrix side of the membrane. A helical transmembrane segment spans residues 272–294 (FYKGFTPSFLRLGSWNVVMFVTY). Residues 279–301 (SFLRLGSWNVVMFVTYEQLKRAL) are purine nucleotide binding. Over 295–312 (EQLKRALMKVQMLRESPF) the chain is Mitochondrial intermembrane.

The protein belongs to the mitochondrial carrier (TC 2.A.29) family. As to quaternary structure, interacts with HAX1; the interaction is direct and calcium-dependent. Only in skeletal muscle and heart. Also expressed in white and brown adipose tissues. Is more expressed in glycolytic than in oxidative skeletal muscles.

The protein resides in the mitochondrion inner membrane. With respect to regulation, the proton transporter activity is activated by fatty acids (in vitro). The proton transporter activity is inhibited by ATP and ADP (in vitro). The effect of Ubiquinone/coenzyme Q10 on the proton transporter activity in reconstituted membranes is unclear (in vitro). Putative transmembrane transporter that plays a role in mitochondrial metabolism via an as yet unclear mechanism. Originally, this mitochondrial protein was thought to act as a proton transmembrane transporter from the mitochondrial intermembrane space into the matrix, causing proton leaks through the inner mitochondrial membrane, thereby uncoupling mitochondrial membrane potential generation from ATP synthesis. However, this function is controversial and uncoupling may not be the function, or at least not the main function, but rather a consequence of more conventional metabolite transporter activity. The polypeptide is Putative mitochondrial transporter UCP3 (Homo sapiens (Human)).